The sequence spans 112 residues: Large ribosomal subunit protein uL22 (112 aa).

This sequence belongs to the universal ribosomal protein uL22 family. In terms of assembly, part of the 50S ribosomal subunit.

Functionally, this protein binds specifically to 23S rRNA; its binding is stimulated by other ribosomal proteins, e.g. L4, L17, and L20. It is important during the early stages of 50S assembly. It makes multiple contacts with different domains of the 23S rRNA in the assembled 50S subunit and ribosome. The globular domain of the protein is located near the polypeptide exit tunnel on the outside of the subunit, while an extended beta-hairpin is found that lines the wall of the exit tunnel in the center of the 70S ribosome. This Akkermansia muciniphila (strain ATCC BAA-835 / DSM 22959 / JCM 33894 / BCRC 81048 / CCUG 64013 / CIP 107961 / Muc) protein is Large ribosomal subunit protein uL22.